The sequence spans 216 residues: Large ribosomal subunit protein uL3 (216 aa).

Positions 132 to 157 are disordered; sequence FRGQGASHGTQAVHRKPGSIGGCATP.

The protein belongs to the universal ribosomal protein uL3 family. As to quaternary structure, part of the 50S ribosomal subunit. Forms a cluster with proteins L14 and L19.

One of the primary rRNA binding proteins, it binds directly near the 3'-end of the 23S rRNA, where it nucleates assembly of the 50S subunit. The sequence is that of Large ribosomal subunit protein uL3 from Saccharopolyspora erythraea (strain ATCC 11635 / DSM 40517 / JCM 4748 / NBRC 13426 / NCIMB 8594 / NRRL 2338).